The primary structure comprises 473 residues: Trehalose-6-phosphate synthase (473 aa).

A D-glucose 6-phosphate-binding site is contributed by R10. 21–22 (GG) is a binding site for UDP-alpha-D-glucose. D-glucose 6-phosphate contacts are provided by Y76 and D130. The UDP-alpha-D-glucose site is built by R262 and K267. R300 lines the D-glucose 6-phosphate pocket. UDP-alpha-D-glucose contacts are provided by residues F339 and 365–369 (LVAKE). The interval 454-473 (TPRSPERQQQNNVATFPKLA) is disordered.

It belongs to the glycosyltransferase 20 family. As to quaternary structure, homotetramer.

It carries out the reaction D-glucose 6-phosphate + UDP-alpha-D-glucose = alpha,alpha-trehalose 6-phosphate + UDP + H(+). Its pathway is glycan biosynthesis; trehalose biosynthesis. Probably involved in the osmoprotection via the biosynthesis of trehalose. Catalyzes the transfer of glucose from UDP-alpha-D-glucose (UDP-Glc) to D-glucose 6-phosphate (Glc-6-P) to form trehalose-6-phosphate. Acts with retention of the anomeric configuration of the UDP-sugar donor. This chain is Trehalose-6-phosphate synthase, found in Salmonella choleraesuis (strain SC-B67).